We begin with the raw amino-acid sequence, 162 residues long: MSSPSPALSHLDESGQIRMVDVGAKSASDRIAIARGAVRMNALAYGLLTQPGQGKGEVLNTARVAAVLAAKRCAELIPLCHSLPLAFVGVDFSLDDATHTVEVRATCRTHYKTGVEMEAMTAASVAALTIYDMCKAADKGIVIEQIRLEYKAGGKSGEWRND.

Substrate-binding positions include 79–81 (LCH) and 117–118 (ME). The active site involves D132.

The protein belongs to the MoaC family. In terms of assembly, homohexamer; trimer of dimers.

The enzyme catalyses (8S)-3',8-cyclo-7,8-dihydroguanosine 5'-triphosphate = cyclic pyranopterin phosphate + diphosphate. The protein operates within cofactor biosynthesis; molybdopterin biosynthesis. Catalyzes the conversion of (8S)-3',8-cyclo-7,8-dihydroguanosine 5'-triphosphate to cyclic pyranopterin monophosphate (cPMP). The chain is Cyclic pyranopterin monophosphate synthase from Bordetella petrii (strain ATCC BAA-461 / DSM 12804 / CCUG 43448).